The sequence spans 262 residues: Phosphatidylglycerol--prolipoprotein diacylglyceryl transferase (262 aa).

A run of 4 helical transmembrane segments spans residues 9–29 (LGPL…ILAV), 41–61 (IIPD…ILGA), 80–100 (IFAI…GALV), and 109–129 (LINT…AQSL). An a 1,2-diacyl-sn-glycero-3-phospho-(1'-sn-glycerol)-binding site is contributed by R131. The next 3 helical transmembrane spans lie at 167-187 (QPTF…ILIF), 197-217 (GHIT…IEGM), and 226-246 (GFRV…MIVI).

Belongs to the Lgt family.

Its subcellular location is the cell membrane. It carries out the reaction L-cysteinyl-[prolipoprotein] + a 1,2-diacyl-sn-glycero-3-phospho-(1'-sn-glycerol) = an S-1,2-diacyl-sn-glyceryl-L-cysteinyl-[prolipoprotein] + sn-glycerol 1-phosphate + H(+). Its pathway is protein modification; lipoprotein biosynthesis (diacylglyceryl transfer). In terms of biological role, catalyzes the transfer of the diacylglyceryl group from phosphatidylglycerol to the sulfhydryl group of the N-terminal cysteine of a prolipoprotein, the first step in the formation of mature lipoproteins. The sequence is that of Phosphatidylglycerol--prolipoprotein diacylglyceryl transferase from Streptococcus pneumoniae serotype 4 (strain ATCC BAA-334 / TIGR4).